The sequence spans 359 residues: Type-1 angiotensin II receptor (359 aa).

Topologically, residues 1 to 25 (MVPNYSTEETVKRIHVDCPVSGRHS) are extracellular. Asn-4 carries an N-linked (GlcNAc...) asparagine glycan. Residue Asp-17 participates in angiotensin II binding. Intrachain disulfides connect Cys-18–Cys-274 and Cys-101–Cys-180. Residues 26–55 (YIYIMVPTVYSIIFIIGIFGNSLVVIVIYC) form a helical membrane-spanning segment. Residues 56–61 (YMKLKT) lie on the Cytoplasmic side of the membrane. Residues 62–89 (VASIFLLNLALADLCFLITLPLWAAYTA) traverse the membrane as a helical segment. Residues 90 to 98 (MEYQWPFGN) lie on the Extracellular side of the membrane. A helical transmembrane segment spans residues 99–125 (CLCKLASAGISFNLYASVFLLTCLSID). Topologically, residues 126 to 141 (RYLAIVHPVKSRIRRT) are cytoplasmic. The helical transmembrane segment at 142-165 (MFVARVTCIVIWLLAGVASLPVII) threads the bilayer. The Extracellular segment spans residues 166–190 (HRNIFFAENLNMTVCGFRYDNNNTT). Arg-167 lines the angiotensin II pocket. Asn-176 carries an N-linked (GlcNAc...) asparagine glycan. Residues Phe-182 and Tyr-184 each coordinate angiotensin II. N-linked (GlcNAc...) asparagine glycosylation is found at Asn-187 and Asn-188. A helical membrane pass occupies residues 191–216 (LRVGLGLSKNLLGFLIPFLIILTSYT). Lys-199 contacts angiotensin II. At 217-239 (LIWKTLKKAYQIQRNKTRNDDIF) the chain is on the cytoplasmic side. The chain crosses the membrane as a helical span at residues 240–268 (KMIVAIVFFFFFSWIPHQVFTFLDVLIQL). Residues 269–278 (HVITDCKITD) are Extracellular-facing. The helical transmembrane segment at 279-304 (IVDTAMPFTICIAYFNNCLNPFFYVF) threads the bilayer. The Cytoplasmic portion of the chain corresponds to 305–359 (FGKNFKKYFLQLIKYIPPNVSTHPSLTTKMSSLSYRPPENIRLPTKKTAGSFDAE).

The protein belongs to the G-protein coupled receptor 1 family. C-terminal Ser or Thr residues may be phosphorylated.

It is found in the cell membrane. In terms of biological role, receptor for angiotensin II, a vasoconstricting peptide, which acts as a key regulator of blood pressure and sodium retention by the kidney. The activated receptor in turn couples to G-alpha proteins G(q) (GNAQ, GNA11, GNA14 or GNA15) and thus activates phospholipase C and increases the cytosolic Ca(2+) concentrations, which in turn triggers cellular responses such as stimulation of protein kinase C. The sequence is that of Type-1 angiotensin II receptor (AGTR1) from Gallus gallus (Chicken).